The primary structure comprises 387 residues: Cyclin-B1-4 (387 aa).

Residues 1 to 29 (MASSRVSDLPHQRGIAGEIKPKNVAGHGR) form a disordered region.

The protein belongs to the cyclin family. Cyclin AB subfamily.

The sequence is that of Cyclin-B1-4 (CYCB1-4) from Arabidopsis thaliana (Mouse-ear cress).